We begin with the raw amino-acid sequence, 187 residues long: Cytochrome b-245 chaperone 1 (187 aa).

The helical transmembrane segment at 20 to 42 (GIRSWSLLVGILSTGLAAAYYSG) threads the bilayer. A disordered region spans residues 167–187 (ESPSERSQSSDSEPDGPGGQS). Residues serine 168 and serine 170 each carry the phosphoserine modification.

Belongs to the CYBC1 family. As to quaternary structure, interacts with CYBB; CYBC1 may act as a chaperone stabilizing Cytochrome b-245 heterodimer.

Its subcellular location is the endoplasmic reticulum membrane. Functions as a chaperone necessary for a stable expression of the CYBA and CYBB subunits of the cytochrome b-245 heterodimer. Controls the phagocyte respiratory burst and is essential for innate immunity. The polypeptide is Cytochrome b-245 chaperone 1 (Rattus norvegicus (Rat)).